The primary structure comprises 146 residues: Large ribosomal subunit protein uL15 (146 aa).

Positions 1–56 (MKLHELKAAEGANKASKRVGRGTGSGLGKTSGRGQNGQNSRSGGGVRPGFEGGQMP) are disordered. Composition is skewed to gly residues over residues 21–35 (RGTG…GRGQ) and 42–52 (SGGGVRPGFEG).

This sequence belongs to the universal ribosomal protein uL15 family. Part of the 50S ribosomal subunit.

Its function is as follows. Binds to the 23S rRNA. The polypeptide is Large ribosomal subunit protein uL15 (Clostridium botulinum (strain ATCC 19397 / Type A)).